The chain runs to 41 residues: Large ribosomal subunit protein bL36 (41 aa).

This sequence belongs to the bacterial ribosomal protein bL36 family.

The polypeptide is Large ribosomal subunit protein bL36 (Bartonella henselae (strain ATCC 49882 / DSM 28221 / CCUG 30454 / Houston 1) (Rochalimaea henselae)).